A 329-amino-acid chain; its full sequence is Deoxynucleotidyltransferase terminal-interacting protein 1 (329 aa).

2 disordered regions span residues M1–E22 and K147–S178. Residues M56–K147 form an important for dimerization region. Residues K147–H158 are compositionally biased toward basic and acidic residues. Positions R159 to G173 form a DNA-binding region, a.T hook. At S161 the chain carries Phosphoserine. The Nuclear localization signal motif lies at P164–R170. The important for DNA and nucleosome binding stretch occupies residues R197–T316. Residues G216 to P237 constitute a DNA-binding region (H-T-H motif).

Monomer and homodimer. A minor proportion may form homotrimers. Interacts with ZNF541. Interacts with the terminal deoxynucleotidyltransferase DNTT. Interacts with TRERF1. Identified in a histone deacetylase complex that contains DNTTIP1, HDAC1 and MIDEAS; this complex assembles into a tetramer that contains four copies of each protein chain. Component of a histone deacetylase complex containing DNTTIP1, ZNF541, HDAC1 and HDAC2. Identified in a complex with KCTD19, HDAC1, HDAC2 and ZNF541.

It localises to the nucleus. Increases DNTT terminal deoxynucleotidyltransferase activity (in vitro). Also acts as a transcriptional regulator, binding to the consensus sequence 5'-GNTGCATG-3' following an AT-tract. Associates with RAB20 promoter and positively regulates its transcription. Binds DNA and nucleosomes; may recruit HDAC1 complexes to nucleosomes or naked DNA. The chain is Deoxynucleotidyltransferase terminal-interacting protein 1 (DNTTIP1) from Homo sapiens (Human).